The sequence spans 367 residues: GDP-perosamine synthase (367 aa).

K181 carries the post-translational modification N6-(pyridoxal phosphate)lysine.

This sequence belongs to the DegT/DnrJ/EryC1 family. Homotetramer. Requires pyridoxal 5'-phosphate as cofactor.

It carries out the reaction GDP-alpha-D-perosamine + 2-oxoglutarate = GDP-4-dehydro-alpha-D-rhamnose + L-glutamate. The protein operates within bacterial outer membrane biogenesis; LPS O-antigen biosynthesis. Its function is as follows. Catalyzes the synthesis of GDP-perosamine from GDP-4-keto-6-deoxy-D-mannose and L-glutamate. Also shows weak activity with L-glutamine. The polypeptide is GDP-perosamine synthase (Vibrio cholerae).